A 52-amino-acid polypeptide reads, in one-letter code: uncharacterized protein (52 aa).

This is an uncharacterized protein from Rickettsia conorii (strain ATCC VR-613 / Malish 7).